The chain runs to 546 residues: Phosphomethylpyrimidine synthase (546 aa).

Substrate-binding positions include asparagine 145, methionine 174, tyrosine 203, histidine 239, 259-261 (SRG), 300-303 (DGLR), and glutamate 339. Histidine 343 contributes to the Zn(2+) binding site. Tyrosine 366 contributes to the substrate binding site. Histidine 407 contributes to the Zn(2+) binding site. [4Fe-4S] cluster contacts are provided by cysteine 487, cysteine 490, and cysteine 495.

The protein belongs to the ThiC family. [4Fe-4S] cluster serves as cofactor.

It catalyses the reaction 5-amino-1-(5-phospho-beta-D-ribosyl)imidazole + S-adenosyl-L-methionine = 4-amino-2-methyl-5-(phosphooxymethyl)pyrimidine + CO + 5'-deoxyadenosine + formate + L-methionine + 3 H(+). The protein operates within cofactor biosynthesis; thiamine diphosphate biosynthesis. In terms of biological role, catalyzes the synthesis of the hydroxymethylpyrimidine phosphate (HMP-P) moiety of thiamine from aminoimidazole ribotide (AIR) in a radical S-adenosyl-L-methionine (SAM)-dependent reaction. In Mycobacterium ulcerans (strain Agy99), this protein is Phosphomethylpyrimidine synthase.